A 732-amino-acid chain; its full sequence is Kell blood group glycoprotein (732 aa).

Residues 1–37 (MEGGDQSEEEPRERSQAGGMGTLWSQESTPEERLPVE) are disordered. Topologically, residues 1–47 (MEGGDQSEEEPRERSQAGGMGTLWSQESTPEERLPVEGSRPWAVARR) are cytoplasmic. Residue serine 7 is modified to Phosphoserine. A helical; Signal-anchor for type II membrane protein transmembrane segment spans residues 48–67 (VLTAILILGLLLCFSVLLFY). Topologically, residues 68–732 (NFQNCGPRPC…LNPSSRCQLW (665 aa)) are extracellular. Positions 76-732 (PCETSVCLDL…LNPSSRCQLW (657 aa)) constitute a Peptidase M13 domain. A disulfide bond links cysteine 77 and cysteine 82. Residues asparagine 94 and asparagine 115 are each glycosylated (N-linked (GlcNAc...) asparagine). 4 disulfides stabilise this stretch: cysteine 100–cysteine 717, cysteine 108–cysteine 682, cysteine 155–cysteine 410, and cysteine 610–cysteine 729. An N-linked (GlcNAc...) asparagine; in KEL2 antigen glycan is attached at asparagine 191. N-linked (GlcNAc...) asparagine glycosylation occurs at asparagine 345. Histidine 581 serves as a coordination point for Zn(2+). The active site involves glutamate 582. Zn(2+) is bound at residue histidine 585. N-linked (GlcNAc...) asparagine glycosylation is present at asparagine 627. Residue glutamate 634 coordinates Zn(2+). The active-site Proton donor is the aspartate 638. The segment at 684–703 (KPSPQDSHDTHSPPHLRVHG) is disordered.

Belongs to the peptidase M13 family. As to quaternary structure, heterodimer with XK; disulfide-linked. It depends on Zn(2+) as a cofactor. N-glycosylated. Expressed at high levels in erythrocytes and testis (in Sertoli cells), and, at lower levels, in skeletal muscle, tonsils (in follicular dendritic cells), lymph node, spleen and appendix (at protein level). Also expressed in many adult and fetal nonerythroid tissues, including brain, spleen, lymph nodes and bone marrow.

Its subcellular location is the cell membrane. Functionally, zinc endopeptidase with endothelin-3-converting enzyme activity. Cleaves EDN1, EDN2 and EDN3, with a marked preference for EDN3. The polypeptide is Kell blood group glycoprotein (KEL) (Homo sapiens (Human)).